We begin with the raw amino-acid sequence, 77 residues long: MISNAKIARINELAAKAKAGVITEEEKAEQQKLRQEYLKGFRSSMKNTLKSVKIIDPEGNDVTPEKLKREQRNNKLH.

A disordered region spans residues 56-77 (DPEGNDVTPEKLKREQRNNKLH). Positions 63–77 (TPEKLKREQRNNKLH) are enriched in basic and acidic residues.

The protein belongs to the UPF0291 family.

The protein resides in the cytoplasm. The protein is UPF0291 protein YnzC (ynzC) of Bacillus subtilis (strain 168).